Reading from the N-terminus, the 155-residue chain is MNCPFCSHFESKVVDSRPTDEGQAIRRRRECVSCHKRFTTYEKIEEIPLIVVKKSGNRESFNRNKVLNGMIRACEKRPVPLNKIEAIVDHIEKQLYNSMEKEITTEFIGTLVIDQIKQLDEVAYVRFASVYREFKDINTFMDELKKLLKEKPEEA.

A zinc finger spans residues 3 to 34 (CPFCSHFESKVVDSRPTDEGQAIRRRRECVSC). One can recognise an ATP-cone domain in the interval 49-139 (LIVVKKSGNR…VYREFKDINT (91 aa)).

It belongs to the NrdR family. Requires Zn(2+) as cofactor.

Functionally, negatively regulates transcription of bacterial ribonucleotide reductase nrd genes and operons by binding to NrdR-boxes. This is Transcriptional repressor NrdR from Alkaliphilus metalliredigens (strain QYMF).